A 296-amino-acid polypeptide reads, in one-letter code: (3R)-3-[(carboxymethyl)amino]fatty acid oxygenase/decarboxylase (296 aa).

(3R)-3-[(carboxymethyl)amino]butanoate is bound by residues Y66, Y71, and G98. (3R)-3-{[carboxy(hydroxy)methyl]amino}butanoate contacts are provided by Y66, Y71, and G98. Fe(2+) contacts are provided by H102 and D104. Residues Y105 and K163 each coordinate (3R)-3-[(carboxymethyl)amino]butanoate. 2 residues coordinate (3R)-3-{[carboxy(hydroxy)methyl]amino}butanoate: Y105 and K163. H265 is a binding site for Fe(2+). A 2-oxoglutarate-binding site is contributed by H269. Residue R280 participates in (3R)-3-[(carboxymethyl)amino]butanoate binding. R280 serves as a coordination point for (3R)-3-{[carboxy(hydroxy)methyl]amino}butanoate.

Belongs to the TfdA dioxygenase family. The cofactor is Fe(2+).

It carries out the reaction a (3R)-3-[(carboxymethyl)amino]fatty acid + 2 2-oxoglutarate + 2 O2 = a (3R)-3-isocyanyl-fatty acid + 2 succinate + 3 CO2 + 2 H2O. The enzyme catalyses a (3R)-3-[(carboxymethyl)amino]fatty acid + 2-oxoglutarate + O2 = a (3R)-3-{[carboxy(hydroxy)methyl]amino}fatty acid + succinate + CO2. The catalysed reaction is a (3R)-3-{[carboxy(hydroxy)methyl]amino}fatty acid + 2-oxoglutarate + O2 = a (3R)-3-isocyanyl-fatty acid + succinate + 2 CO2 + 2 H2O. It catalyses the reaction (3R)-3-[(carboxymethyl)amino]butanoate + 2 2-oxoglutarate + 2 O2 = (3R)-3-isocyanylbutanoate + 2 succinate + 3 CO2 + 2 H2O. It carries out the reaction (3R)-3-[(carboxymethyl)amino]butanoate + 2-oxoglutarate + O2 = (3R)-3-{[carboxy(hydroxy)methyl]amino}butanoate + succinate + CO2. The enzyme catalyses (3R)-3-{[carboxy(hydroxy)methyl]amino}butanoate + 2-oxoglutarate + O2 = (3R)-3-isocyanylbutanoate + succinate + 2 CO2 + 2 H2O. Its function is as follows. Involved in the biosynthesis of a unique class of isonitrile lipopeptides (INLPs). Catalyzes the conversion of (3R)-3-[(carboxymethyl)amino]fatty acids such as (3R)-3-[(carboxymethyl)amino]butanoate (CABA) to (3R)-3-isocyanylbutanoate (INBA) through an oxidative decarboxylation mechanism, thereby generating the isonitrile group of INLPs. This is (3R)-3-[(carboxymethyl)amino]fatty acid oxygenase/decarboxylase from Streptomyces coeruleorubidus.